Here is a 556-residue protein sequence, read N- to C-terminus: Peptide chain release factor 3 (556 aa).

A tr-type G domain is found at 28–297 (QQRRNFAIIS…AFLDYALKPG (270 aa)). GTP-binding positions include 37 to 44 (SHPDAGKT), 105 to 109 (DTPGH), and 159 to 162 (NKMD).

This sequence belongs to the TRAFAC class translation factor GTPase superfamily. Classic translation factor GTPase family. PrfC subfamily.

The protein localises to the cytoplasm. Its function is as follows. Increases the formation of ribosomal termination complexes and stimulates activities of RF-1 and RF-2. It binds guanine nucleotides and has strong preference for UGA stop codons. It may interact directly with the ribosome. The stimulation of RF-1 and RF-2 is significantly reduced by GTP and GDP, but not by GMP. The sequence is that of Peptide chain release factor 3 from Synechococcus sp. (strain ATCC 27144 / PCC 6301 / SAUG 1402/1) (Anacystis nidulans).